The chain runs to 812 residues: MRYIRSIYIFCSIVTSVRSGASELPEERELTTNFSSMSLTKVPEGLTPITTTLDLSYNLLFQLQHSDFRSLSKLKVLILCHNRIQELDIKTFEFNKELSYLDVSNNRLKSVTWFSLAGLRHLDLSFNDFDTLPISVETGNMSHLETLGLSGAKIQKSDFQKIAHLQLNTVLLGLRTLSHYEEGSLPILNTTRLHIVLPVNTNFWVLLHDGIKTSKILEVINIDLQKSQFTSYESQQIPILENAKTSILLLNKVDLSWDDLFLIFQLVWHTSVEYFQIQHVTFGGKVYLDHNSFDYSNTVMRTIKLEHVHFRIFNIPQESIYLLFTKMDIENLTISDAQMPHMLFPMYPTRFQYLNFANNILTDDVFKKSIQLPHLKTLILKDNKLETLSLVSHFASNTSLRHLDLSENLLQHENDENCLWPETLVTMNLSFNKFADSVFGCLPRNIQILDLNSNKIQTVPKAITHLTSLRELNLAFNFLTDLPGCSHFRRLLVLNVEMNLILSSSLDFFQSCQEVKTLNAGRNPFRCTCELRDFIQLGKYSEGMMVGWSDSYICEYPLNLKGTQLKDVHLPEISCNTGLLIVTIVVVMLVLGMAVAFCCLHFDLPWYLRMLHQWTQTWLRVRKTTQEQLKRSVQFHVFISYSEHDSAWVKYELIPSLEKEDGSVLICLHEGNSDPGKSMTEDTINCIEKSYKSIFVLSPSFVQTEWCHYEPYFAHHNLFHESLDYIILILLEPIPLYCIPTRYPELKALMEKKAYLEWPKDRRKCGLFWANLRAALHVNLLDTRGTCELQTFTELNEGFGGSAISLIRTDCL.

The N-terminal stretch at 1-19 is a signal peptide; the sequence is MRYIRSIYIFCSIVTSVRS. The Extracellular portion of the chain corresponds to 20 to 577; the sequence is GASELPEERE…VHLPEISCNT (558 aa). LRR repeat units lie at residues 24-46, 49-70, 73-94, 97-118, and 119-139; these read LPEE…PEGL, ITTT…DFRS, KLKV…TFEF, ELSY…SLAG, and LRHL…VETG. N-linked (GlcNAc...) asparagine glycosylation occurs at Asn-33. A glycan (N-linked (GlcNAc...) asparagine) is linked at Asn-140. An LRR 6 repeat occupies 143-166; the sequence is HLETLGLSGAKIQKSDFQKIAHLQ. Asn-189 carries an N-linked (GlcNAc...) asparagine glycan. LRR repeat units lie at residues 296 to 321, 325 to 348, 350 to 373, and 374 to 395; these read SNTV…ESIY, TKMD…PMYP, RFQY…IQLP, and HLKT…SHFA. Asn-331 carries N-linked (GlcNAc...) asparagine glycosylation. Asn-397 carries N-linked (GlcNAc...) asparagine glycosylation. LRR repeat units follow at residues 399–420, 423–443, 445–467, 468–489, and 490–510; these read SLRH…NCLW, TLVT…GCLP, NIQI…THLT, SLRE…SHFR, and RLLV…DFFQ. An N-linked (GlcNAc...) asparagine glycan is attached at Asn-428. The LRRCT domain maps to 523–577; it reads NPFRCTCELRDFIQLGKYSEGMMVGWSDSYICEYPLNLKGTQLKDVHLPEISCNT. A helical membrane pass occupies residues 578–598; sequence GLLIVTIVVVMLVLGMAVAFC. Residues 599-812 lie on the Cytoplasmic side of the membrane; the sequence is CLHFDLPWYL…AISLIRTDCL (214 aa). The TIR domain occupies 633-776; sequence VQFHVFISYS…LFWANLRAAL (144 aa).

Belongs to the Toll-like receptor family. Binds MYD88 via their respective TIR domains.

Its subcellular location is the membrane. Its function is as follows. Participates in the innate immune response to microbial agents. Acts via MYD88 and TRAF6, leading to NF-kappa-B activation, cytokine secretion and the inflammatory response. In Bos taurus (Bovine), this protein is Toll-like receptor 10 (TLR10).